A 219-amino-acid polypeptide reads, in one-letter code: Endonuclease V (219 aa).

Residues aspartate 41 and aspartate 107 each coordinate Mg(2+).

It belongs to the endonuclease V family. Requires Mg(2+) as cofactor.

It is found in the cytoplasm. The catalysed reaction is Endonucleolytic cleavage at apurinic or apyrimidinic sites to products with a 5'-phosphate.. Functionally, DNA repair enzyme involved in the repair of deaminated bases. Selectively cleaves double-stranded DNA at the second phosphodiester bond 3' to a deoxyinosine leaving behind the intact lesion on the nicked DNA. This chain is Endonuclease V, found in Desulfurococcus amylolyticus (strain DSM 18924 / JCM 16383 / VKM B-2413 / 1221n) (Desulfurococcus kamchatkensis).